The following is a 248-amino-acid chain: Anamorsin homolog (248 aa).

The interval 4 to 129 (FKGLQKSLYI…ETGSSARLSF (126 aa)) is N-terminal SAM-like domain. Residues 130 to 161 (AKKNANAANVWKISGDDEELIDEEELLDEEDK) are linker. The [2Fe-2S] cluster site is built by C172, C181, C184, and C186. The segment at 172 to 186 (CSTTGKRKACKNCSC) is fe-S binding site A. C209, C212, C220, and C223 together coordinate [4Fe-4S] cluster. 2 short sequence motifs (cx2C motif) span residues 209–212 (CGNC) and 220–223 (CSTC). The segment at 209-223 (CGNCYLGDAFRCSTC) is fe-S binding site B.

It belongs to the anamorsin family. As to quaternary structure, monomer. The cofactor is [2Fe-2S] cluster. It depends on [4Fe-4S] cluster as a cofactor.

Its subcellular location is the cytoplasm. The protein resides in the mitochondrion intermembrane space. Functionally, component of the cytosolic iron-sulfur (Fe-S) protein assembly (CIA) machinery. Required for the maturation of extramitochondrial Fe-S proteins. Part of an electron transfer chain functioning in an early step of cytosolic Fe-S biogenesis, facilitating the de novo assembly of a [4Fe-4S] cluster on the cytosolic Fe-S scaffold complex. Electrons are transferred from NADPH via a FAD- and FMN-containing diflavin oxidoreductase. Together with the diflavin oxidoreductase, also required for the assembly of the diferric tyrosyl radical cofactor of ribonucleotide reductase (RNR), probably by providing electrons for reduction during radical cofactor maturation in the catalytic small subunit. In Drosophila sechellia (Fruit fly), this protein is Anamorsin homolog.